Here is a 289-residue protein sequence, read N- to C-terminus: MLGFLNLHKPTGMTSHDCVGKVRRICGLKRVGHGGTLDPLATGVLPIALGPATRLLHYLPDQKTYQATIQFGLTTTTDDLAGDILSEQSANHLAQEVVEKALPQFLGSIEQRPPAYSAIQVKGQRLYDLARQGKDVTAPLRQVEVFDIQILDWQGGEKSELQVEIACGPGTYIRSIARDLGEVLGTGATLAQLTRTLSCGFALADSLTFETLAEQVQAGTFSPLEPSFSLQQPILHLPPAEAQRFCWGQKLPQDCADGMMQVHDTSDRFLGMGEIIDGLLKPKVVLPAQ.

Asp38 serves as the catalytic Nucleophile.

The protein belongs to the pseudouridine synthase TruB family. Type 1 subfamily.

It catalyses the reaction uridine(55) in tRNA = pseudouridine(55) in tRNA. Functionally, responsible for synthesis of pseudouridine from uracil-55 in the psi GC loop of transfer RNAs. The chain is tRNA pseudouridine synthase B from Acaryochloris marina (strain MBIC 11017).